We begin with the raw amino-acid sequence, 130 residues long: Small ribosomal subunit protein uS8 (130 aa).

This sequence belongs to the universal ribosomal protein uS8 family. In terms of assembly, part of the 30S ribosomal subunit.

One of the primary rRNA binding proteins, it binds directly to 16S rRNA central domain where it helps coordinate assembly of the platform of the 30S subunit. This chain is Small ribosomal subunit protein uS8, found in Methanocorpusculum labreanum (strain ATCC 43576 / DSM 4855 / Z).